A 449-amino-acid polypeptide reads, in one-letter code: UDP-N-acetylmuramoylalanine--D-glutamate ligase (449 aa).

118–124 (GTNGKTT) is an ATP binding site.

Belongs to the MurCDEF family.

Its subcellular location is the cytoplasm. It catalyses the reaction UDP-N-acetyl-alpha-D-muramoyl-L-alanine + D-glutamate + ATP = UDP-N-acetyl-alpha-D-muramoyl-L-alanyl-D-glutamate + ADP + phosphate + H(+). The protein operates within cell wall biogenesis; peptidoglycan biosynthesis. Its function is as follows. Cell wall formation. Catalyzes the addition of glutamate to the nucleotide precursor UDP-N-acetylmuramoyl-L-alanine (UMA). The sequence is that of UDP-N-acetylmuramoylalanine--D-glutamate ligase from Staphylococcus aureus (strain MW2).